The chain runs to 250 residues: 2,3-bisphosphoglycerate-dependent phosphoglycerate mutase (250 aa).

Residues 10-17 (RHGESQWN), 23-24 (TG), Arg-62, 89-92 (ERHY), Lys-100, 116-117 (RR), and 185-186 (GN) contribute to the substrate site. His-11 serves as the catalytic Tele-phosphohistidine intermediate. Glu-89 serves as the catalytic Proton donor/acceptor.

It belongs to the phosphoglycerate mutase family. BPG-dependent PGAM subfamily. Homodimer.

It carries out the reaction (2R)-2-phosphoglycerate = (2R)-3-phosphoglycerate. Its pathway is carbohydrate degradation; glycolysis; pyruvate from D-glyceraldehyde 3-phosphate: step 3/5. Its function is as follows. Catalyzes the interconversion of 2-phosphoglycerate and 3-phosphoglycerate. The sequence is that of 2,3-bisphosphoglycerate-dependent phosphoglycerate mutase from Salmonella choleraesuis (strain SC-B67).